The chain runs to 123 residues: MKTILGFKGLFYLHSLIWTCAGDWSAIQVHCTQFWFFARIKPTIFYNLYVNPDEVFLGDGCHVTHVLPNVYYEFFYHPHDCGIVTQPLQEVLLLKTKIRYISRDSTVRSEMPLSCVVHKQKCQ.

The signal sequence occupies residues 1–26 (MKTILGFKGLFYLHSLIWTCAGDWSA).

Belongs to the PLAC1 family.

The protein resides in the secreted. Its function is as follows. May be involved in cell differentiation. The chain is Putative oocyte-secreted protein 1 homolog (OOSP1) from Homo sapiens (Human).